We begin with the raw amino-acid sequence, 328 residues long: tRNA uridine(34) hydroxylase (328 aa).

Residues 130–224 (LDEDTVVLDT…YGKDPEVQGE (95 aa)) form the Rhodanese domain. Residue Cys-184 is the Cysteine persulfide intermediate of the active site.

Belongs to the TrhO family.

The enzyme catalyses uridine(34) in tRNA + AH2 + O2 = 5-hydroxyuridine(34) in tRNA + A + H2O. In terms of biological role, catalyzes oxygen-dependent 5-hydroxyuridine (ho5U) modification at position 34 in tRNAs. This is tRNA uridine(34) hydroxylase from Streptococcus pyogenes serotype M49 (strain NZ131).